Here is a 507-residue protein sequence, read N- to C-terminus: MNVLFIFSLLFLAALESCADDRRSPLEKCFQEADYEDFLEIARNGLKETSNPKHVVVVGAGMAGLSAAYVLAGAGHKVTLLEASERVGGRVITYHNDREGWYVNMGPMRLPERHRIVREYIRKFGLKLNEFFQENENAWYYINNIRKRVWEVKKDPSLLKYPVKPSEEGKSASQLYQESLRKVIEELKRTNCSYILNKYDSYSTKEYLIKEGNLSRGAVDMIGDLLNEDSSYHLSFMESLKSDALFSYEKRFDEIVGGFDQLPISMYQAIAEMVHLNARVIKIQYDAEKVRVTYQTPAKTFVTADYVIVCSTSRAARRIYFEPPLPPKKAHALRSIHYRSATKIFLTCSKKFWEADGIHGGKSTTDLPSRFIHYPNHNFTSGIGVIMAYVLADDSDFFQALDTKTCADIVINDLSLIHDLPKREIQALCYPSIKKWNLDKYTMGSITSFTPYQFQDYFESAAAPVGRIHFAGEYTGRFHGWIDSTIMTGLRAARDVNRASQKPSKIR.

The first 19 residues, methionine 1 to alanine 19, serve as a signal peptide directing secretion. The cysteines at positions 29 and 192 are disulfide-linked. FAD-binding positions include methionine 62 to alanine 63, glutamate 82 to alanine 83, arginine 90, and glycine 106 to arginine 109. A substrate-binding site is contributed by arginine 109. Residues asparagine 191 and asparagine 213 are each glycosylated (N-linked (GlcNAc...) asparagine). Valine 280 contributes to the FAD binding site. Cysteine 348 and cysteine 429 are oxidised to a cystine. Asparagine 378 carries N-linked (GlcNAc...) asparagine glycosylation. Tyrosine 389 contacts substrate. Residues glutamate 473 and glycine 480–threonine 485 each bind FAD.

Belongs to the flavin monoamine oxidase family. FIG1 subfamily. As to quaternary structure, homodimer; non-covalently linked. It depends on FAD as a cofactor. Expressed by the venom gland.

It is found in the secreted. It carries out the reaction an L-alpha-amino acid + O2 + H2O = a 2-oxocarboxylate + H2O2 + NH4(+). It catalyses the reaction L-leucine + O2 + H2O = 4-methyl-2-oxopentanoate + H2O2 + NH4(+). Functionally, catalyzes an oxidative deamination of predominantly hydrophobic and aromatic L-amino acids, thus producing hydrogen peroxide that may contribute to the diverse toxic effects of this enzyme. Shows activity on L-Leu. Exhibits diverse biological activities, such as hemorrhage, hemolysis, edema, apoptosis of vascular endothelial cells or tumor cell lines, antibacterial and antiparasitic activities. This protein induces platelet aggregation by both hydrogen peroxide production and binding to platelet membrane proteins (that would enhance the sensitivity of platelets to hydrogen peroxide). Effects of snake L-amino oxidases on platelets are controversial, since they either induce aggregation or inhibit agonist-induced aggregation. These different effects are probably due to different experimental conditions. The chain is L-amino-acid oxidase from Naja atra (Chinese cobra).